The primary structure comprises 320 residues: MRQTKTGILLANLGTPDAPTPEAVKRYLKQFLSDRRVVDTPRLLWWPLLRGVILPLRSPRVAKLYQSIWMDGGSPLMVYSREQQQALAARLPDTPVALGMSYGSPSLESAVDELLASDVDHIVVLPLYPQYSCSTVGAVWDELGRILARKRRIPGISFIRDYADDGAYIDALAKSARESFARHGEPDLLLLSYHGIPQRYADEGDDYPQRCRDTTRELVSALGLPPEKVMMTFQSRFGREPWLTPYTDETLKMLGEKGTGHIQVMCPGFAADCLETLEEIAEQNREIFLEAGGKKYAYIQALNATPEHIDMILKLTAPYR.

Fe cation contacts are provided by His194 and Glu275.

Belongs to the ferrochelatase family. Monomer.

It localises to the cytoplasm. The enzyme catalyses heme b + 2 H(+) = protoporphyrin IX + Fe(2+). Its pathway is porphyrin-containing compound metabolism; protoheme biosynthesis; protoheme from protoporphyrin-IX: step 1/1. In terms of biological role, catalyzes the ferrous insertion into protoporphyrin IX. The chain is Ferrochelatase from Salmonella typhi.